We begin with the raw amino-acid sequence, 490 residues long: Betaine aldehyde dehydrogenase (490 aa).

Residues Ile27 and Asp93 each coordinate K(+). 150–152 serves as a coordination point for NAD(+); the sequence is GAW. The active-site Charge relay system is Lys162. 176–179 contacts NAD(+); that stretch reads KPSE. Val180 contributes to the K(+) binding site. NAD(+) is bound at residue 230–233; sequence GTTT. A K(+)-binding site is contributed by Leu246. Glu252 functions as the Proton acceptor in the catalytic mechanism. 3 residues coordinate NAD(+): Gly254, Cys286, and Glu387. Cys286 acts as the Nucleophile in catalysis. At Cys286 the chain carries Cysteine sulfenic acid (-SOH). Residues Lys457 and Gly460 each coordinate K(+). Glu464 acts as the Charge relay system in catalysis.

Belongs to the aldehyde dehydrogenase family. Dimer of dimers. K(+) serves as cofactor.

The catalysed reaction is betaine aldehyde + NAD(+) + H2O = glycine betaine + NADH + 2 H(+). The protein operates within amine and polyamine biosynthesis; betaine biosynthesis via choline pathway; betaine from betaine aldehyde: step 1/1. Involved in the biosynthesis of the osmoprotectant glycine betaine. Catalyzes the irreversible oxidation of betaine aldehyde to the corresponding acid. The sequence is that of Betaine aldehyde dehydrogenase from Pseudomonas putida (strain W619).